A 1079-amino-acid chain; its full sequence is Electrogenic sodium bicarbonate cotransporter 1 (1079 aa).

A required for interaction with AHCYL1 region spans residues 1–62; that stretch reads MEDEAVLDRG…EKREKERISE (62 aa). Over 1 to 466 the chain is Cytoplasmic; the sequence is MEDEAVLDRG…FASDFYDALN (466 aa). A Phosphotyrosine modification is found at Y30. The span at 39–52 shows a compositional bias: basic residues; sequence YRRRRRHKRKTGHK. Residues 39 to 78 are disordered; it reads YRRRRRHKRKTGHKEKREKERISENYSDKSDVENADESSS. T49 is subject to Phosphothreonine; by PKA. A compositionally biased stretch (basic and acidic residues) spans 53–70; the sequence is EKREKERISENYSDKSDV. Residues S61, S65, S68, S223, S232, S233, and S245 each carry the phosphoserine modification. A disordered region spans residues 237–265; it reads MFTSPDNGSPAMTHRNLTSSSLNDISDKP. A phosphothreonine mark is found at T249 and T254. The span at 251-260 shows a compositional bias: polar residues; the sequence is RNLTSSSLND. S256, S257, and S262 each carry phosphoserine. The chain crosses the membrane as a helical span at residues 467–491; the sequence is IQSLSAILFIYLATVTNAITFGGLL. Over 492 to 501 the chain is Extracellular; that stretch reads GDATDNMQGV. Residues 502–520 form a helical membrane-spanning segment; the sequence is LESFLGTAVSGAIFCLFAG. Position 521 (Q521) is a topological domain, cytoplasmic. A discontinuously helical membrane pass occupies residues 522–542; it reads PLTILSSTGPVLVFERLLFNF. Residues 543 to 550 are Extracellular-facing; that stretch reads SKDHNFDY. Residues 551-571 form a helical membrane-spanning segment; sequence LEFRLWIGLWSAFLCLILVAT. The Cytoplasmic segment spans residues 572–585; that stretch reads DASFLVQYFTRFTE. The chain crosses the membrane as a helical span at residues 586 to 609; the sequence is EGFSSLISFIFIYDAFKKMIKLAD. Residues 610–692 lie on the Extracellular side of the membrane; the sequence is YYPINSDFKV…GNNCNFVPDV (83 aa). The chain crosses the membrane as a helical span at residues 693 to 710; the sequence is TLMSFILFLGTYTSSMAL. The Cytoplasmic portion of the chain corresponds to 711-725; the sequence is KKFKTSRYFPTTARK. A helical membrane pass occupies residues 726–745; it reads LISDFAIILSILIFCVIDAL. Topologically, residues 746 to 779 are extracellular; it reads VGVDTPKLIVPSEFKPTSPNRGWFVPPFGGNPWW. Residues 748–779 are interaction with CA4; sequence VDTPKLIVPSEFKPTSPNRGWFVPPFGGNPWW. The chain crosses the membrane as a helical span at residues 780-807; the sequence is VYLAAAIPALLVTILIFMDQQITAVIVN. At 808-819 the chain is on the cytoplasmic side; the sequence is RKEHKLKKGAGY. A helical transmembrane segment spans residues 820–836; that stretch reads HLDLFWVAILMVVCSFM. Residue A837 is a topological domain, extracellular. The chain crosses the membrane as a discontinuously helical span at residues 838–855; the sequence is LPWYVAATVISIAHIDSL. Over 856–877 the chain is Cytoplasmic; sequence KMETETSAPGEQPKFLGVREQR. Residues 878–894 traverse the membrane as a helical segment; it reads VTGTLVFILTGLSVFMA. Topologically, residues 895-901 are extracellular; the sequence is PILKFIP. The chain crosses the membrane as a helical span at residues 902 to 918; it reads MPVLYGVFLYMGVASLN. The Cytoplasmic portion of the chain corresponds to 919–960; it reads GVQFMDRLKLLLMPLKHQPDFIYLRHVPLRRVHLFTFLQVLC. Residues 961 to 986 constitute an intramembrane region (discontinuously helical); it reads LALLWILKSTVAAIIFPVMILALVAV. At 987–1079 the chain is on the cytoplasmic side; sequence RKGMDYLFSQ…STFLERHTSC (93 aa). Residues 1002 to 1004 form a CA2-binding region; it reads LDD. The segment at 1012-1079 is disordered; the sequence is KKKEDEKKKK…STFLERHTSC (68 aa). S1026 carries the phosphoserine; by PKA modification. S1029 is modified (phosphoserine). The CA2-binding stretch occupies residues 1030–1033; the sequence is DNDD. 2 positions are modified to phosphoserine: S1034 and S1044. The segment at 1057-1059 is required for basolateral targeting; sequence FLS. The segment covering 1062–1079 has biased composition (basic and acidic residues); the sequence is KPSDREKSSTFLERHTSC. Residue S1069 is modified to Phosphoserine.

It belongs to the anion exchanger (TC 2.A.31) family. Homodimer. Interacts with CA2/carbonic anhydrase 2 and CA4/carbonic anhydrase 4 which may regulate transporter activity. Isoform 1 but not isoform 2 interacts with AHCYL1 (via PEST domain when phosphorylated); the interaction increases SLC4A4 isoform 1 activity. Interacts with AHCYL2. Phosphorylation of Ser-1026 by PKA increases the binding of CA2 and changes the Na(+):HCO3(-) stoichiometry of the transporter from 3:1 to 2:1. Phosphorylated in presence of STK39 and dephosphorylated in presence of PP1 phosphatase; phosphorylation seems to inhibit SLC4A4 activity. In terms of processing, N-glycosylated. May not be necessary for the transporter basic functions. As to expression, expressed in colonic mucosa, kidney cortex and to gastric mucosa.

Its subcellular location is the basolateral cell membrane. The protein localises to the cell membrane. The catalysed reaction is 2 hydrogencarbonate(out) + Na(+)(out) = 2 hydrogencarbonate(in) + Na(+)(in). It catalyses the reaction 3 hydrogencarbonate(out) + Na(+)(out) = 3 hydrogencarbonate(in) + Na(+)(in). Its function is as follows. Electrogenic sodium/bicarbonate cotransporter with a Na(+):HCO3(-) stoichiometry varying from 1:2 to 1:3. May regulate bicarbonate influx/efflux at the basolateral membrane of cells and regulate intracellular pH. The sequence is that of Electrogenic sodium bicarbonate cotransporter 1 (SLC4A4) from Oryctolagus cuniculus (Rabbit).